Here is a 358-residue protein sequence, read N- to C-terminus: Phospho-N-acetylmuramoyl-pentapeptide-transferase (358 aa).

The next 10 helical transmembrane spans lie at 13–47 (LFILNTFALIVTSYLFNNFIFTGVYILFFFISIFI), 81–101 (MGGIFMIIPFLILLLIITINL), 106–126 (LILLLLTVFGFFITGFLDDYL), 148–168 (ISIIFILLAYEKNLISPLITI), 171–191 (SWAINMNIFILPVAFLVLVGI), 201–221 (LDGLAAGCSGIVFYGLGTEIL), 228–248 (LFVFSILCFSMSGICLGFLKY), 255–275 (IFMGDTGSLSIGAILGSIALL), 278–298 (SIFTLSIFSGIFIIESLSVII), and 336–356 (IVENFWKINILLVILGIVLKI).

The protein belongs to the glycosyltransferase 4 family. MraY subfamily. Requires Mg(2+) as cofactor.

The protein resides in the cell inner membrane. The enzyme catalyses UDP-N-acetyl-alpha-D-muramoyl-L-alanyl-gamma-D-glutamyl-meso-2,6-diaminopimeloyl-D-alanyl-D-alanine + di-trans,octa-cis-undecaprenyl phosphate = di-trans,octa-cis-undecaprenyl diphospho-N-acetyl-alpha-D-muramoyl-L-alanyl-D-glutamyl-meso-2,6-diaminopimeloyl-D-alanyl-D-alanine + UMP. Its pathway is cell wall biogenesis; peptidoglycan biosynthesis. In terms of biological role, catalyzes the initial step of the lipid cycle reactions in the biosynthesis of the cell wall peptidoglycan: transfers peptidoglycan precursor phospho-MurNAc-pentapeptide from UDP-MurNAc-pentapeptide onto the lipid carrier undecaprenyl phosphate, yielding undecaprenyl-pyrophosphoryl-MurNAc-pentapeptide, known as lipid I. The polypeptide is Phospho-N-acetylmuramoyl-pentapeptide-transferase (Prochlorococcus marinus (strain MIT 9301)).